The sequence spans 395 residues: Protochlorophyllide reductase B, chloroplastic (395 aa).

The transit peptide at 1 to 59 directs the protein to the chloroplast; the sequence is MALQAATSFLPSALSARKEGAAKDSAFFGVRLADGLKLDATSLGLRTKRVNTSSVAIRA.

Belongs to the short-chain dehydrogenases/reductases (SDR) family. POR subfamily.

Its subcellular location is the plastid. It is found in the chloroplast. It catalyses the reaction chlorophyllide a + NADP(+) = protochlorophyllide a + NADPH + H(+). It participates in porphyrin-containing compound metabolism; chlorophyll biosynthesis. Its function is as follows. Phototransformation of protochlorophyllide (Pchlide) to chlorophyllide (Chlide). In Hordeum vulgare (Barley), this protein is Protochlorophyllide reductase B, chloroplastic (PORB).